A 309-amino-acid chain; its full sequence is 4-hydroxy-3-methylbut-2-enyl diphosphate reductase (309 aa).

Cys12 contributes to the [4Fe-4S] cluster binding site. (2E)-4-hydroxy-3-methylbut-2-enyl diphosphate-binding residues include His41 and His74. Residues His41 and His74 each contribute to the dimethylallyl diphosphate site. Residues His41 and His74 each contribute to the isopentenyl diphosphate site. [4Fe-4S] cluster is bound at residue Cys96. Residue His124 participates in (2E)-4-hydroxy-3-methylbut-2-enyl diphosphate binding. Residue His124 coordinates dimethylallyl diphosphate. His124 is a binding site for isopentenyl diphosphate. Glu126 functions as the Proton donor in the catalytic mechanism. Thr167 contacts (2E)-4-hydroxy-3-methylbut-2-enyl diphosphate. Cys197 contacts [4Fe-4S] cluster. (2E)-4-hydroxy-3-methylbut-2-enyl diphosphate is bound by residues Ser225, Ser226, Asn227, and Ser269. Dimethylallyl diphosphate-binding residues include Ser225, Ser226, Asn227, and Ser269. Residues Ser225, Ser226, Asn227, and Ser269 each coordinate isopentenyl diphosphate.

It belongs to the IspH family. Requires [4Fe-4S] cluster as cofactor.

It carries out the reaction isopentenyl diphosphate + 2 oxidized [2Fe-2S]-[ferredoxin] + H2O = (2E)-4-hydroxy-3-methylbut-2-enyl diphosphate + 2 reduced [2Fe-2S]-[ferredoxin] + 2 H(+). It catalyses the reaction dimethylallyl diphosphate + 2 oxidized [2Fe-2S]-[ferredoxin] + H2O = (2E)-4-hydroxy-3-methylbut-2-enyl diphosphate + 2 reduced [2Fe-2S]-[ferredoxin] + 2 H(+). Its pathway is isoprenoid biosynthesis; dimethylallyl diphosphate biosynthesis; dimethylallyl diphosphate from (2E)-4-hydroxy-3-methylbutenyl diphosphate: step 1/1. It functions in the pathway isoprenoid biosynthesis; isopentenyl diphosphate biosynthesis via DXP pathway; isopentenyl diphosphate from 1-deoxy-D-xylulose 5-phosphate: step 6/6. Its function is as follows. Catalyzes the conversion of 1-hydroxy-2-methyl-2-(E)-butenyl 4-diphosphate (HMBPP) into a mixture of isopentenyl diphosphate (IPP) and dimethylallyl diphosphate (DMAPP). Acts in the terminal step of the DOXP/MEP pathway for isoprenoid precursor biosynthesis. The protein is 4-hydroxy-3-methylbut-2-enyl diphosphate reductase of Pseudoalteromonas translucida (strain TAC 125).